A 246-amino-acid chain; its full sequence is ATP synthase subunit a, chloroplastic (246 aa).

The next 5 helical transmembrane spans lie at 35 to 55 (AQVLITSWIVIGLILGLTFLA), 94 to 114 (IPFIGTMFLFIFVSNWSGALI), 132 to 152 (DINTTVALALLTSVAYFYAGL), 198 to 218 (LVVAVLVSLVPLVVPIPMMFL), and 219 to 239 (GLFTSAIQALIFATLAAAYIG).

It belongs to the ATPase A chain family. In terms of assembly, F-type ATPases have 2 components, CF(1) - the catalytic core - and CF(0) - the membrane proton channel. CF(1) has five subunits: alpha(3), beta(3), gamma(1), delta(1), epsilon(1). CF(0) has four main subunits: a, b, b' and c.

The protein resides in the plastid. It is found in the chloroplast thylakoid membrane. In terms of biological role, key component of the proton channel; it plays a direct role in the translocation of protons across the membrane. This chain is ATP synthase subunit a, chloroplastic, found in Chara vulgaris (Common stonewort).